The chain runs to 210 residues: NADH dehydrogenase [ubiquinone] iron-sulfur protein 8, mitochondrial (210 aa).

The N-terminal 34 residues, 1–34 (MRCLTTPMLLRALAQAARAGPPGGRSLHSSAVAA), are a transit peptide targeting the mitochondrion. 2 4Fe-4S ferredoxin-type domains span residues 102-131 (RRYP…IEAE) and 141-170 (TRYD…EGPN). [4Fe-4S] cluster is bound by residues Cys111, Cys114, Cys117, Cys121, Cys150, Cys153, Cys156, and Cys160.

Belongs to the complex I 23 kDa subunit family. Core subunit of respiratory chain NADH dehydrogenase (Complex I) which is composed of 45 different subunits. This is a component of the iron-sulfur (IP) fragment of the enzyme. Interacts with RAB5IF. The cofactor is [4Fe-4S] cluster. As to expression, expressed in all tissues with the highest level in heart and skeletal muscle and the lowest level in lung.

Its subcellular location is the mitochondrion inner membrane. It catalyses the reaction a ubiquinone + NADH + 5 H(+)(in) = a ubiquinol + NAD(+) + 4 H(+)(out). Core subunit of the mitochondrial membrane respiratory chain NADH dehydrogenase (Complex I) which catalyzes electron transfer from NADH through the respiratory chain, using ubiquinone as an electron acceptor. Essential for the catalytic activity and assembly of complex I. This is NADH dehydrogenase [ubiquinone] iron-sulfur protein 8, mitochondrial (NDUFS8) from Homo sapiens (Human).